The primary structure comprises 607 residues: LRR receptor kinase SERK2 (607 aa).

An N-terminal signal peptide occupies residues 1–21 (MRELRVAVLIIAVSLPSFSAS). Residues 22-219 (DRQGDALYDM…QSGSHSSKIG (198 aa)) are Extracellular-facing. N-linked (GlcNAc...) asparagine glycans are attached at residues asparagine 36 and asparagine 110. 4 LRR repeats span residues 87 to 110 (LKYL…QFGN), 111 to 135 (LSSL…LGQL), 136 to 159 (SKLQ…LAKI), and 160 to 183 (SSLT…LFQV). Residues asparagine 149, asparagine 171, asparagine 187, and asparagine 206 are each glycosylated (N-linked (GlcNAc...) asparagine). Residues 220–240 (IVLGTVGGVIGLLIVAALFLF) form a helical membrane-spanning segment. The Cytoplasmic segment spans residues 241–607 (CKGRRKSHLR…QEAIELSGGR (367 aa)). In terms of domain architecture, Protein kinase spans 284–563 (FSERNVLGQG…VVRMLEGEGL (280 aa)). ATP-binding positions include 290–298 (LGQGGFGKV) and lysine 312. The active-site Proton acceptor is aspartate 411.

Belongs to the protein kinase superfamily. Ser/Thr protein kinase family.

Its subcellular location is the cell membrane. The catalysed reaction is L-seryl-[protein] + ATP = O-phospho-L-seryl-[protein] + ADP + H(+). The enzyme catalyses L-threonyl-[protein] + ATP = O-phospho-L-threonyl-[protein] + ADP + H(+). May be involved in the regulation of plant growth through the brassinosteroid (BR) signaling pathway. In Oryza sativa subsp. japonica (Rice), this protein is LRR receptor kinase SERK2.